The chain runs to 1380 residues: DNA-directed RNA polymerase subunit beta (1380 aa).

This sequence belongs to the RNA polymerase beta chain family. In terms of assembly, the RNAP catalytic core consists of 2 alpha, 1 beta, 1 beta' and 1 omega subunit. When a sigma factor is associated with the core the holoenzyme is formed, which can initiate transcription.

The enzyme catalyses RNA(n) + a ribonucleoside 5'-triphosphate = RNA(n+1) + diphosphate. Its function is as follows. DNA-dependent RNA polymerase catalyzes the transcription of DNA into RNA using the four ribonucleoside triphosphates as substrates. This chain is DNA-directed RNA polymerase subunit beta, found in Alcanivorax borkumensis (strain ATCC 700651 / DSM 11573 / NCIMB 13689 / SK2).